Here is a 502-residue protein sequence, read N- to C-terminus: Histidine--tRNA ligase (502 aa).

It belongs to the class-II aminoacyl-tRNA synthetase family. In terms of assembly, homodimer.

It is found in the cytoplasm. It carries out the reaction tRNA(His) + L-histidine + ATP = L-histidyl-tRNA(His) + AMP + diphosphate + H(+). This Brucella abortus (strain S19) protein is Histidine--tRNA ligase.